The following is a 297-amino-acid chain: Protein MIZU-KUSSEI 1 (297 aa).

In terms of tissue distribution, expressed in root meristematic region, cortical cells, lateral root cap cells, columella cells of the root cap, mature region of the roots and leaf hydathodes.

The protein resides in the endoplasmic reticulum membrane. Plays a role in lateral root development by maintaining auxin levels. This function requires GNOM (GN/MIZ2) activity. Negatively regulates cytokinin sensitivity on root development. Positively regulates hydrotropism in roots. This Arabidopsis thaliana (Mouse-ear cress) protein is Protein MIZU-KUSSEI 1 (MIZ1).